The sequence spans 433 residues: Adenylosuccinate synthetase (433 aa).

GTP is bound by residues 13–19 (GDEGKGK) and 41–43 (GHT). Asp14 acts as the Proton acceptor in catalysis. Residues Asp14 and Gly41 each coordinate Mg(2+). IMP contacts are provided by residues 14-17 (DEGK), 39-42 (NAGH), Thr130, Arg144, Gln225, Thr240, and Arg304. His42 serves as the catalytic Proton donor. 300–306 (STTGRKR) provides a ligand contact to substrate. GTP is bound by residues Arg306, 332–334 (KLD), and 414–416 (STG).

This sequence belongs to the adenylosuccinate synthetase family. Homodimer. Mg(2+) serves as cofactor.

It localises to the cytoplasm. The catalysed reaction is IMP + L-aspartate + GTP = N(6)-(1,2-dicarboxyethyl)-AMP + GDP + phosphate + 2 H(+). It participates in purine metabolism; AMP biosynthesis via de novo pathway; AMP from IMP: step 1/2. Functionally, plays an important role in the de novo pathway of purine nucleotide biosynthesis. Catalyzes the first committed step in the biosynthesis of AMP from IMP. The protein is Adenylosuccinate synthetase of Buchnera aphidicola subsp. Acyrthosiphon pisum (strain Tuc7).